Reading from the N-terminus, the 363-residue chain is UDP-N-acetylglucosamine--N-acetylmuramyl-(pentapeptide) pyrophosphoryl-undecaprenol N-acetylglucosamine transferase (363 aa).

UDP-N-acetyl-alpha-D-glucosamine is bound by residues 14-16 (TGG), asparagine 122, arginine 163, serine 190, and glutamine 285.

It belongs to the glycosyltransferase 28 family. MurG subfamily.

Its subcellular location is the cell inner membrane. It catalyses the reaction di-trans,octa-cis-undecaprenyl diphospho-N-acetyl-alpha-D-muramoyl-L-alanyl-D-glutamyl-meso-2,6-diaminopimeloyl-D-alanyl-D-alanine + UDP-N-acetyl-alpha-D-glucosamine = di-trans,octa-cis-undecaprenyl diphospho-[N-acetyl-alpha-D-glucosaminyl-(1-&gt;4)]-N-acetyl-alpha-D-muramoyl-L-alanyl-D-glutamyl-meso-2,6-diaminopimeloyl-D-alanyl-D-alanine + UDP + H(+). It functions in the pathway cell wall biogenesis; peptidoglycan biosynthesis. Its function is as follows. Cell wall formation. Catalyzes the transfer of a GlcNAc subunit on undecaprenyl-pyrophosphoryl-MurNAc-pentapeptide (lipid intermediate I) to form undecaprenyl-pyrophosphoryl-MurNAc-(pentapeptide)GlcNAc (lipid intermediate II). The chain is UDP-N-acetylglucosamine--N-acetylmuramyl-(pentapeptide) pyrophosphoryl-undecaprenol N-acetylglucosamine transferase from Prochlorococcus marinus (strain MIT 9312).